The primary structure comprises 259 residues: uncharacterized protein (259 aa).

The 240-residue stretch at 4 to 243 folds into the ABC transporter domain; it reads INLKNINLTR…KILTDFYQEK (240 aa). 36-43 is an ATP binding site; it reads GLNGSGKS.

The protein belongs to the ABC transporter superfamily.

This is an uncharacterized protein from Lactococcus lactis subsp. lactis (strain IL1403) (Streptococcus lactis).